Here is a 1196-residue protein sequence, read N- to C-terminus: Phosphatidylinositol-3,5-bisphosphate 3-phosphatase MTMR3 (1196 aa).

Residue serine 8 is modified to Phosphoserine. In terms of domain architecture, Myotubularin phosphatase spans 155–576 (EHVTSRFKNE…RNLMLWSAVY (422 aa)). Asparagine 326, asparagine 351, and isoleucine 352 together coordinate a 1,2-diacyl-sn-glycero-3-phospho-(1D-myo-inositol-3,5-bisphosphate). Asparagine 326, asparagine 351, and isoleucine 352 together coordinate a 1,2-diacyl-sn-glycero-3-phospho-(1D-myo-inositol-3-phosphate). Cysteine 413 functions as the Phosphocysteine intermediate in the catalytic mechanism. The a 1,2-diacyl-sn-glycero-3-phospho-(1D-myo-inositol-3,5-bisphosphate) site is built by serine 414, aspartate 415, glycine 416, tryptophan 417, aspartate 418, arginine 419, lysine 455, and arginine 459. Positions 414, 415, 416, 417, 418, and 419 each coordinate a 1,2-diacyl-sn-glycero-3-phospho-(1D-myo-inositol-3-phosphate). Residue arginine 459 coordinates a 1,2-diacyl-sn-glycero-3-phospho-(1D-myo-inositol-3-phosphate). Residues 587–612 (DDSCAPYPVPGTSPDEPPLSRLPKTR) form a disordered region. Residues 593–603 (YPVPGTSPDEP) show a composition bias toward pro residues. Serine 613, serine 633, serine 647, and serine 651 each carry phosphoserine. 2 disordered regions span residues 697–719 (TKEESGVEEPTHRGHTEVPEVKE) and 855–900 (ESGP…HRTS). Serine 907 carries the post-translational modification Phosphoserine. Polar residues predominate over residues 993 to 1008 (NSHSGRPSTTSSPDQP). The segment at 993 to 1019 (NSHSGRPSTTSSPDQPSRSHLDDDGMP) is disordered. Positions 1027 to 1060 (QRLRQIESGHQQEVETLKKQVQELKSRLESQYLT) form a coiled coil. Serine 1062 carries the post-translational modification Phosphoserine. An FYVE-type zinc finger spans residues 1117 to 1177 (DHLAAHCYAC…VCKSCYSSLH (61 aa)). Zn(2+) is bound by residues cysteine 1123, cysteine 1126, cysteine 1139, cysteine 1142, cysteine 1147, cysteine 1150, cysteine 1169, and cysteine 1172.

This sequence belongs to the protein-tyrosine phosphatase family. Non-receptor class myotubularin subfamily. In terms of assembly, forms heterodimers with MTMR4 that recruit both CEP55 and PLK1; occurs during early mitosis, regulates the phosphorylation of CEP55 by PLK1 and its recruitment to the midbody where it mediates cell abscission.

It is found in the cytoplasm. The protein localises to the cytosol. The protein resides in the membrane. The catalysed reaction is a 1,2-diacyl-sn-glycero-3-phospho-(1D-myo-inositol-3,5-bisphosphate) + H2O = a 1,2-diacyl-sn-glycero-3-phospho-(1D-myo-inositol-5-phosphate) + phosphate. It catalyses the reaction a 1,2-diacyl-sn-glycero-3-phospho-(1D-myo-inositol-3-phosphate) + H2O = a 1,2-diacyl-sn-glycero-3-phospho-(1D-myo-inositol) + phosphate. The enzyme catalyses 1,2-dihexadecanoyl-sn-glycero-3-phospho-(1D-myo-inositol-3-phosphate) + H2O = 1,2-dihexadecanoyl-sn-glycero-3-phospho-(1D-myo-inositol) + phosphate. It carries out the reaction 1,2-dioctanoyl-sn-glycero-3-phospho-(1-D-myo-inositol-3-phosphate) + H2O = 1,2-dioctanoyl-sn-glycero-3-phospho-(1D-myo-inositol) + phosphate. The catalysed reaction is 1,2-dihexadecanoyl-sn-glycero-3-phospho-(1D-myo-inositol-3,5-phosphate) + H2O = 1,2-dihexadecanoyl-sn-glycero-3-phospho-(1D-myo-inositol-5-phosphate) + phosphate. In terms of biological role, lipid phosphatase that specifically dephosphorylates the D-3 position of phosphatidylinositol 3-phosphate and phosphatidylinositol 3,5-bisphosphate, generating phosphatidylinositol and phosphatidylinositol 5-phosphate. Decreases the levels of phosphatidylinositol 3-phosphate, a phospholipid found in cell membranes where it acts as key regulator of both cell signaling and intracellular membrane traffic. Could also have a molecular sequestering/adapter activity and regulate biological processes independently of its phosphatase activity. It includes the regulation of midbody abscission during mitotic cytokinesis. This chain is Phosphatidylinositol-3,5-bisphosphate 3-phosphatase MTMR3, found in Mus musculus (Mouse).